Consider the following 101-residue polypeptide: Iron-sulfur cluster assembly protein CyaY (101 aa).

The protein belongs to the frataxin family.

In terms of biological role, involved in iron-sulfur (Fe-S) cluster assembly. May act as a regulator of Fe-S biogenesis. The sequence is that of Iron-sulfur cluster assembly protein CyaY from Rickettsia felis (strain ATCC VR-1525 / URRWXCal2) (Rickettsia azadi).